The chain runs to 757 residues: 5-methyltetrahydropteroyltriglutamate--homocysteine methyltransferase (757 aa).

5-methyltetrahydropteroyltri-L-glutamate contacts are provided by residues R16 to K19 and K112. L-homocysteine is bound by residues I432–S434 and E485. Residues I432–S434 and E485 contribute to the L-methionine site. 5-methyltetrahydropteroyltri-L-glutamate-binding positions include R516–C517 and W562. L-homocysteine is bound at residue D600. D600 is an L-methionine binding site. E606 serves as a coordination point for 5-methyltetrahydropteroyltri-L-glutamate. 3 residues coordinate Zn(2+): H642, C644, and E666. The Proton donor role is filled by H695. Residue C727 participates in Zn(2+) binding.

The protein belongs to the vitamin-B12 independent methionine synthase family. Zn(2+) is required as a cofactor.

It catalyses the reaction 5-methyltetrahydropteroyltri-L-glutamate + L-homocysteine = tetrahydropteroyltri-L-glutamate + L-methionine. The protein operates within amino-acid biosynthesis; L-methionine biosynthesis via de novo pathway; L-methionine from L-homocysteine (MetE route): step 1/1. Catalyzes the transfer of a methyl group from 5-methyltetrahydrofolate to homocysteine resulting in methionine formation. This chain is 5-methyltetrahydropteroyltriglutamate--homocysteine methyltransferase, found in Actinobacillus pleuropneumoniae serotype 5b (strain L20).